A 246-amino-acid polypeptide reads, in one-letter code: Orotidine 5'-phosphate decarboxylase (246 aa).

Residues D22, K44, 71 to 80, T131, R192, Q201, G221, and R222 each bind substrate; that span reads DLKFHDIPNT. K73 acts as the Proton donor in catalysis.

Belongs to the OMP decarboxylase family. Type 1 subfamily. In terms of assembly, homodimer.

It catalyses the reaction orotidine 5'-phosphate + H(+) = UMP + CO2. Its pathway is pyrimidine metabolism; UMP biosynthesis via de novo pathway; UMP from orotate: step 2/2. Its function is as follows. Catalyzes the decarboxylation of orotidine 5'-monophosphate (OMP) to uridine 5'-monophosphate (UMP). The chain is Orotidine 5'-phosphate decarboxylase from Yersinia enterocolitica serotype O:8 / biotype 1B (strain NCTC 13174 / 8081).